The following is a 323-amino-acid chain: Pathogenicity locus probable regulatory protein WtsA (323 aa).

The region spanning 41–251 (VAPLEIDLVL…ELKTAAKRFT (211 aa)) is the Sigma-54 factor interaction domain. Residues 52-59 (GETGTGKD) and 123-132 (EIDSMPLSLQ) contribute to the ATP site. A DNA-binding region (H-T-H motif) is located at residues 293-312 (IDEAAMELGMPLRTLYHRIK).

In terms of biological role, positive activator of wtsB involved in plant pathogenicity. Probably interacts with sigma-54. The sequence is that of Pathogenicity locus probable regulatory protein WtsA (wtsA) from Pantoea stewartii subsp. stewartii (Erwinia stewartii).